Consider the following 261-residue polypeptide: MEIKEITIIGGYDKNGNPEPVREVTIKRGEIVGVVGPTGSGKSNLISDIEQLAQGDTISKRRILVNGEVPPIEMRRDPKKRRIAQLSQNMNFLADMTVEEFILMHAKSRGVYRENIVDEVIELANRLTGEPIKKDYNLTILSGGQSRSLMVADVAVISDSPIVLIDEIENAGIKKHEALELLAGYGKIVLVITHDPVLALMTDRRIVMRNGGMQKIIETTEEEKEISRKINEVDNWLLSLREKIRFGERLTHEDISLMVKG.

The ABC transporter domain occupies 1-236 (MEIKEITIIG…SRKINEVDNW (236 aa)). 36 to 43 (GPTGSGKS) provides a ligand contact to ATP.

It belongs to the ABC transporter superfamily.

This is an uncharacterized protein from Methanocaldococcus jannaschii (strain ATCC 43067 / DSM 2661 / JAL-1 / JCM 10045 / NBRC 100440) (Methanococcus jannaschii).